We begin with the raw amino-acid sequence, 267 residues long: Glucosamine-6-phosphate deaminase (267 aa).

Asp71 acts as the Proton acceptor; for enolization step in catalysis. Asp140 functions as the For ring-opening step in the catalytic mechanism. Residue His142 is the Proton acceptor; for ring-opening step of the active site. Glu147 serves as the catalytic For ring-opening step.

Belongs to the glucosamine/galactosamine-6-phosphate isomerase family. In terms of assembly, homohexamer.

Its subcellular location is the cytoplasm. It carries out the reaction alpha-D-glucosamine 6-phosphate + H2O = beta-D-fructose 6-phosphate + NH4(+). It functions in the pathway nucleotide-sugar biosynthesis; UDP-N-acetyl-alpha-D-glucosamine biosynthesis; alpha-D-glucosamine 6-phosphate from D-fructose 6-phosphate: step 1/1. Catalyzes the reversible conversion of alpha-D-glucosamine 6-phosphate (GlcN-6P) into beta-D-fructose 6-phosphate (Fru-6P) and ammonium ion, a regulatory reaction step in de novo uridine diphosphate-N-acetyl-alpha-D-glucosamine (UDP-GlcNAc) biosynthesis via hexosamine pathway. The sequence is that of Glucosamine-6-phosphate deaminase from Caenorhabditis elegans.